Reading from the N-terminus, the 1049-residue chain is Isoleucine--tRNA ligase (1049 aa).

Positions 48 to 58 (PYTTGRIHLGT) match the 'HIGH' region motif. The 'KMSKS' region motif lies at 596–600 (KMSKS). Lys599 contacts ATP.

This sequence belongs to the class-I aminoacyl-tRNA synthetase family. IleS type 2 subfamily. In terms of assembly, monomer. The cofactor is Zn(2+).

It localises to the cytoplasm. It catalyses the reaction tRNA(Ile) + L-isoleucine + ATP = L-isoleucyl-tRNA(Ile) + AMP + diphosphate. Catalyzes the attachment of isoleucine to tRNA(Ile). As IleRS can inadvertently accommodate and process structurally similar amino acids such as valine, to avoid such errors it has two additional distinct tRNA(Ile)-dependent editing activities. One activity is designated as 'pretransfer' editing and involves the hydrolysis of activated Val-AMP. The other activity is designated 'posttransfer' editing and involves deacylation of mischarged Val-tRNA(Ile). The chain is Isoleucine--tRNA ligase from Methanothrix thermoacetophila (strain DSM 6194 / JCM 14653 / NBRC 101360 / PT) (Methanosaeta thermophila).